A 758-amino-acid chain; its full sequence is Translation initiation factor IF-2 (758 aa).

A disordered region spans residues 55–168 (EKNVGKQATQ…KTHQPSIPVK (114 aa)). Polar residues-rich tracts occupy residues 60 to 78 (KQAT…QQNH) and 86 to 95 (QRQQSATSKP). The segment covering 96 to 136 (KVNNQQHSNSSNEKSKNTKGNQNRNMTQNNNNNNNNNNNNR) has biased composition (low complexity). In terms of domain architecture, tr-type G spans 259-428 (ERPPVVTIMG…LLVAEVGELK (170 aa)). The G1 stretch occupies residues 268–275 (GHVDHGKT). A GTP-binding site is contributed by 268 to 275 (GHVDHGKT). Positions 293 to 297 (GITQH) are G2. The tract at residues 314 to 317 (DTPG) is G3. GTP contacts are provided by residues 314-318 (DTPGH) and 368-371 (NKMD). The tract at residues 368 to 371 (NKMD) is G4. Positions 404-406 (SAL) are G5.

It belongs to the TRAFAC class translation factor GTPase superfamily. Classic translation factor GTPase family. IF-2 subfamily.

It localises to the cytoplasm. Functionally, one of the essential components for the initiation of protein synthesis. Protects formylmethionyl-tRNA from spontaneous hydrolysis and promotes its binding to the 30S ribosomal subunits. Also involved in the hydrolysis of GTP during the formation of the 70S ribosomal complex. This chain is Translation initiation factor IF-2, found in Lysinibacillus sphaericus (strain C3-41).